We begin with the raw amino-acid sequence, 514 residues long: Phospholipase C D (514 aa).

The segment at residues 1–37 (MSQSHIGGVSRREFLAKVAAGGAGALMSFAGPVIEKA) is a signal peptide (tat-type signal). A disordered region spans residues 492 to 514 (VPDPQIMPTQETTPTRGIPSGPC).

This sequence belongs to the bacterial phospholipase C family. Post-translationally, predicted to be exported by the Tat system. The position of the signal peptide cleavage has not been experimentally proven.

Its subcellular location is the secreted. The protein resides in the cell wall. It catalyses the reaction a 1,2-diacyl-sn-glycero-3-phosphocholine + H2O = phosphocholine + a 1,2-diacyl-sn-glycerol + H(+). Involved in virulence. Induces cytotoxic effects on mouse macrophage cell lines, via direct or indirect enzymatic hydrolysis of cell membrane phospholipids. Hydrolyzes phosphatidylcholine. This chain is Phospholipase C D, found in Mycobacterium tuberculosis (strain CDC 1551 / Oshkosh).